The primary structure comprises 284 residues: Ribosomal RNA small subunit methyltransferase A (284 aa).

S-adenosyl-L-methionine contacts are provided by H12, L14, G47, E68, D93, and N118.

It belongs to the class I-like SAM-binding methyltransferase superfamily. rRNA adenine N(6)-methyltransferase family. RsmA subfamily.

Its subcellular location is the cytoplasm. It catalyses the reaction adenosine(1518)/adenosine(1519) in 16S rRNA + 4 S-adenosyl-L-methionine = N(6)-dimethyladenosine(1518)/N(6)-dimethyladenosine(1519) in 16S rRNA + 4 S-adenosyl-L-homocysteine + 4 H(+). Its function is as follows. Specifically dimethylates two adjacent adenosines (A1518 and A1519) in the loop of a conserved hairpin near the 3'-end of 16S rRNA in the 30S particle. May play a critical role in biogenesis of 30S subunits. This chain is Ribosomal RNA small subunit methyltransferase A, found in Synechocystis sp. (strain ATCC 27184 / PCC 6803 / Kazusa).